A 275-amino-acid chain; its full sequence is Hydroxyethylthiazole kinase (275 aa).

Met50 contributes to the substrate binding site. ATP-binding residues include Arg126 and Ser171. Ala200 is a substrate binding site.

It belongs to the Thz kinase family. Mg(2+) serves as cofactor.

The enzyme catalyses 5-(2-hydroxyethyl)-4-methylthiazole + ATP = 4-methyl-5-(2-phosphooxyethyl)-thiazole + ADP + H(+). It functions in the pathway cofactor biosynthesis; thiamine diphosphate biosynthesis; 4-methyl-5-(2-phosphoethyl)-thiazole from 5-(2-hydroxyethyl)-4-methylthiazole: step 1/1. Its function is as follows. Catalyzes the phosphorylation of the hydroxyl group of 4-methyl-5-beta-hydroxyethylthiazole (THZ). The protein is Hydroxyethylthiazole kinase of Acinetobacter baumannii (strain ACICU).